We begin with the raw amino-acid sequence, 221 residues long: Probable septum site-determining protein MinC (221 aa).

The protein belongs to the MinC family. Interacts with MinD and FtsZ.

Cell division inhibitor that blocks the formation of polar Z ring septums. Rapidly oscillates between the poles of the cell to destabilize FtsZ filaments that have formed before they mature into polar Z rings. Prevents FtsZ polymerization. The chain is Probable septum site-determining protein MinC from Shewanella sp. (strain ANA-3).